The following is a 146-amino-acid chain: Hemoglobin subunit beta (146 aa).

V1 carries the N-acetylvaline modification. Residues 2 to 146 form the Globin domain; the sequence is HLSGEEKTAL…VANALAHKYH (145 aa). S44 is subject to Phosphoserine. At K59 the chain carries N6-acetyllysine. Residue H63 participates in heme b binding. K82 carries the N6-acetyllysine modification. H92 serves as a coordination point for heme b. Residue C93 is modified to S-nitrosocysteine. At K144 the chain carries N6-acetyllysine.

This sequence belongs to the globin family. Heterotetramer of two alpha chains and two beta chains. In terms of tissue distribution, red blood cells.

Its function is as follows. Involved in oxygen transport from the lung to the various peripheral tissues. The protein is Hemoglobin subunit beta of Tamiasciurus hudsonicus (American red squirrel).